The primary structure comprises 114 residues: uncharacterized protein (114 aa).

Residues 31–72 (EFEKLVSEQMKTMDKLLDLQSELDRCKQIEAELRHLERDARL) adopt a coiled-coil conformation.

This is an uncharacterized protein from Bacillus subtilis (strain 168).